Here is a 408-residue protein sequence, read N- to C-terminus: Probable pectate lyase 18 (408 aa).

Residues 1–24 form the signal peptide; that stretch reads MKMQTKKLFITIVSFLLYAPLFLS. N-linked (GlcNAc...) asparagine glycosylation is present at Asn-42. Residues Asp-206, Asp-230, and Asp-234 each coordinate Ca(2+). Arg-286 is an active-site residue.

The protein belongs to the polysaccharide lyase 1 family. It depends on Ca(2+) as a cofactor. In terms of tissue distribution, expressed in flowers, but not in leaves.

It carries out the reaction Eliminative cleavage of (1-&gt;4)-alpha-D-galacturonan to give oligosaccharides with 4-deoxy-alpha-D-galact-4-enuronosyl groups at their non-reducing ends.. The protein operates within glycan metabolism; pectin degradation; 2-dehydro-3-deoxy-D-gluconate from pectin: step 2/5. The protein is Probable pectate lyase 18 of Arabidopsis thaliana (Mouse-ear cress).